The primary structure comprises 298 residues: H-2 class I histocompatibility antigen, alpha chain (298 aa).

Topologically, residues 1-244 are extracellular; sequence RYEPRARWIE…EPPSSTKTNT (244 aa). A glycan (N-linked (GlcNAc...) asparagine) is linked at asparagine 43. A disulfide bridge connects residues cysteine 58 and cysteine 121. Residue asparagine 133 is glycosylated (N-linked (GlcNAc...) asparagine). One can recognise an Ig-like C1-type domain in the interval 142–230; it reads PKAHVTHHRR…EGLPEPLTLR (89 aa). Cysteines 160 and 216 form a disulfide. Residues 245–265 form a helical membrane-spanning segment; sequence VIIAVPVVLGAVVILGAVMAF. The Cytoplasmic portion of the chain corresponds to 266-298; it reads VMKRRRNTGGKGGDYALAPVSQSSDMSLPDCKV. The tract at residues 277–298 is disordered; the sequence is GGDYALAPVSQSSDMSLPDCKV. Serine 289 and serine 292 each carry phosphoserine.

Belongs to the MHC class I family. In terms of assembly, heterodimer of an alpha chain and a beta chain (beta-2-microglobulin).

Its subcellular location is the membrane. In terms of biological role, involved in the presentation of foreign antigens to the immune system. The polypeptide is H-2 class I histocompatibility antigen, alpha chain (H2-D1) (Mus musculus (Mouse)).